The chain runs to 302 residues: GTPase Era (302 aa).

The region spanning 4–171 is the Era-type G domain; it reads KAGFVALVGR…KEKIVSLLPE (168 aa). Residues 12 to 19 are G1; the sequence is GRTNVGKS. 12 to 19 contacts GTP; it reads GRTNVGKS. Residues 38–42 are G2; sequence QTTRN. The G3 stretch occupies residues 59–62; that stretch reads DTPG. Residues 59–63 and 121–124 each bind GTP; these read DTPGI and NKID. Positions 121-124 are G4; it reads NKID. The G5 stretch occupies residues 150-152; that stretch reads ISA. The KH type-2 domain maps to 202–280; that stretch reads LEEEVPHGVY…FLDLWVKTRK (79 aa).

This sequence belongs to the TRAFAC class TrmE-Era-EngA-EngB-Septin-like GTPase superfamily. Era GTPase family. Monomer.

Its subcellular location is the cytoplasm. It localises to the cell membrane. Its function is as follows. An essential GTPase that binds both GDP and GTP, with rapid nucleotide exchange. Plays a role in 16S rRNA processing and 30S ribosomal subunit biogenesis and possibly also in cell cycle regulation and energy metabolism. This chain is GTPase Era, found in Thermoanaerobacter pseudethanolicus (strain ATCC 33223 / 39E) (Clostridium thermohydrosulfuricum).